The primary structure comprises 500 residues: Protein-cysteine N-palmitoyltransferase Rasp (500 aa).

The next 10 helical transmembrane spans lie at Ile-15–Gly-35, Gly-73–Ile-93, Phe-105–Leu-125, Ile-134–Cys-154, Ser-206–Ile-226, Leu-243–Leu-263, Phe-293–Ala-313, Leu-372–Ile-392, Leu-429–Ile-449, and Gly-461–Phe-481. The active site involves His-381.

Belongs to the membrane-bound acyltransferase family. HHAT subfamily.

The protein resides in the membrane. It catalyses the reaction N-terminal L-cysteinyl-[protein] + hexadecanoyl-CoA = N-terminal N-hexadecanoyl-L-cysteinyl-[protein] + CoA + H(+). It carries out the reaction N-terminal L-cysteinyl-[protein]-C-terminal glycyl cholesterol ester + hexadecanoyl-CoA = N-terminal N-hexadecanoyl-L-cysteinyl-[protein]-C-terminal glycyl cholesterol ester + CoA + H(+). In terms of biological role, required in hedgehog (hh) expressing cells for production of appropriate signaling activity in embryos and in the imaginal precursors of adult tissues. Acts within the secretory pathway to catalyze N-terminal palmitoylation of Hh; this lipid modification is required for the embryonic and larval patterning activities of the Hh signal. Not required for Wg signaling. The polypeptide is Protein-cysteine N-palmitoyltransferase Rasp (rasp) (Drosophila melanogaster (Fruit fly)).